Consider the following 275-residue polypeptide: uncharacterized protein (275 aa).

The next 6 membrane-spanning stretches (helical) occupy residues 25–45 (LGYF…FMTA), 70–90 (LLFF…LSAI), 107–127 (IGNF…LRFV), 149–169 (FGQW…IVQF), 203–223 (IARA…AMTA), and 247–267 (ILSI…MKGI).

Its subcellular location is the cell membrane. This is an uncharacterized protein from Bacillus subtilis (strain 168).